An 84-amino-acid chain; its full sequence is Acyl carrier protein (84 aa).

Residues 4–80 (SETFEKVKKI…EAVDYINNQV (77 aa)) form the Carrier domain. The residue at position 40 (Ser-40) is an O-(pantetheine 4'-phosphoryl)serine.

It belongs to the acyl carrier protein (ACP) family. In terms of processing, 4'-phosphopantetheine is transferred from CoA to a specific serine of apo-ACP by AcpS. This modification is essential for activity because fatty acids are bound in thioester linkage to the sulfhydryl of the prosthetic group.

It is found in the cytoplasm. Its pathway is lipid metabolism; fatty acid biosynthesis. Functionally, carrier of the growing fatty acid chain in fatty acid biosynthesis. The chain is Acyl carrier protein from Nostoc sp. (strain PCC 7120 / SAG 25.82 / UTEX 2576).